We begin with the raw amino-acid sequence, 425 residues long: Glucan 1,3-beta-glucosidase (425 aa).

The N-terminal stretch at 1 to 19 is a signal peptide; the sequence is MNLTLLLLALIFSPSLIFS. Glu-219 acts as the Proton donor in catalysis. 2 cysteine pairs are disulfide-bonded: Cys-301–Cys-423 and Cys-326–Cys-352. Residue Glu-318 is the Nucleophile of the active site.

This sequence belongs to the glycosyl hydrolase 5 (cellulase A) family.

The protein localises to the secreted. The catalysed reaction is Successive hydrolysis of beta-D-glucose units from the non-reducing ends of (1-&gt;3)-beta-D-glucans, releasing alpha-glucose.. Functionally, beta-glucanases participate in the metabolism of beta-glucan, the main structural component of the cell wall. It could also function biosynthetically as a transglycosylase. In Schwanniomyces occidentalis (Yeast), this protein is Glucan 1,3-beta-glucosidase.